Here is a 384-residue protein sequence, read N- to C-terminus: WD repeat-containing protein 74 (384 aa).

WD repeat units lie at residues 40 to 80, 83 to 122, 128 to 168, 179 to 220, 224 to 266, and 267 to 306; these read RREE…FLSQ, CPGG…ASSD, KVGP…EPVF, DLRV…RRPV, TYGE…GCLK, and GLAG…GLEH. Ser214 is modified (phosphoserine). At Lys311 the chain carries N6-methyllysine. The required for nucleolar and nuclear location stretch occupies residues 320–384; that stretch reads SGRDNWEDEP…KKKRPGSTSP (65 aa). The tract at residues 323-384 is disordered; that stretch reads DNWEDEPQEP…KKKRPGSTSP (62 aa). Basic residues predominate over residues 371 to 384; sequence QRRKKKKRPGSTSP.

As to quaternary structure, isoform 1 interacts (through WDR repeats) with NVL; the interaction is independent of RNA or pre-60S ribosome particles. Isoform 2 does not interact with NVL. Interacts with MTREX; the interaction dissociation in a late stage of rRNA synthesis is required for appropriate maturation of pre-60S particles and depends on the ATPase activity of NVL.

It is found in the nucleus. Its subcellular location is the nucleolus. Its function is as follows. Regulatory protein of the MTREX-exosome complex involved in the synthesis of the 60S ribosomal subunit. Participates in an early cleavage of the pre-rRNA processing pathway in cooperation with NVL. Required for blastocyst formation, is necessary for RNA transcription, processing and/or stability during preimplantation development. This Mus musculus (Mouse) protein is WD repeat-containing protein 74 (Wdr74).